Here is a 242-residue protein sequence, read N- to C-terminus: Probable transcriptional regulatory protein LSL_0422 (242 aa).

A disordered region spans residues 1 to 21; sequence MSGHSKWHNIQGRKNAQDAKR.

This sequence belongs to the TACO1 family.

Its subcellular location is the cytoplasm. This chain is Probable transcriptional regulatory protein LSL_0422, found in Ligilactobacillus salivarius (strain UCC118) (Lactobacillus salivarius).